The primary structure comprises 1138 residues: Nuclear pore complex-interacting protein family member B4 (1138 aa).

The helical transmembrane segment at 63–87 threads the bilayer; sequence VIIAFPTSYKVVITLWIVYLWVSLL. 3 disordered regions span residues 241 to 263, 291 to 620, and 873 to 1138; these read NRMG…SLSL, TPLP…NIKT, and ERLR…RRLS. The span at 252–262 shows a compositional bias: polar residues; that stretch reads QQHSITDNSLS. The span at 349-359 shows a compositional bias: pro residues; that stretch reads PLPPSALPSAP. Basic and acidic residues-rich tracts occupy residues 406 to 416, 448 to 458, 490 to 500, 532 to 542, 574 to 584, 908 to 918, 950 to 960, and 992 to 1002; these read DNIKTPAERLR.

The protein belongs to the NPIP family.

It is found in the membrane. The protein is Nuclear pore complex-interacting protein family member B4 (NPIPB4) of Homo sapiens (Human).